Consider the following 940-residue polypeptide: Coatomer subunit beta (940 aa).

4 HEAT repeats span residues 11 to 48 (FLEA…NGDS), 90 to 125 (QEMI…KEPE), 126 to 162 (LLDP…VSNH), and 310 to 347 (SILE…SRNV).

Oligomeric complex that consists of at least the alpha, beta, beta', gamma, delta, epsilon and zeta subunits.

The protein resides in the cytoplasm. It is found in the golgi apparatus membrane. It localises to the cytoplasmic vesicle. The protein localises to the COPI-coated vesicle membrane. Its function is as follows. The coatomer is a cytosolic protein complex that binds to dilysine motifs and reversibly associates with Golgi non-clathrin-coated vesicles, which further mediate biosynthetic protein transport from the ER, via the Golgi up to the trans Golgi network. Coatomer complex is required for budding from Golgi membranes, and is essential for the retrograde Golgi-to-ER transport of dilysine-tagged proteins. The sequence is that of Coatomer subunit beta (sec26) from Schizosaccharomyces pombe (strain 972 / ATCC 24843) (Fission yeast).